Reading from the N-terminus, the 277-residue chain is Soluble NSF attachment protein 29 (277 aa).

The span at methionine 1 to arginine 11 shows a compositional bias: basic and acidic residues. Disordered regions lie at residues methionine 1–tyrosine 30, glutamate 49–glutamine 73, and lysine 117–arginine 170. Residues alanine 14 to glycine 28 are compositionally biased toward polar residues. The 63-residue stretch at glutamate 44–leucine 106 folds into the t-SNARE coiled-coil homology 1 domain. Positions glutamate 49–glutamate 65 are enriched in basic and acidic residues. A compositionally biased stretch (polar residues) spans serine 134–arginine 170. Positions glutamate 179–isoleucine 241 constitute a t-SNARE coiled-coil homology 2 domain.

The protein belongs to the SNAP-25 family.

Its subcellular location is the synapse. It localises to the synaptosome. SNAREs, soluble N-ethylmaleimide-sensitive factor-attachment protein receptors, are essential proteins for fusion of cellular membranes. SNAREs localized on opposing membranes assemble to form a trans-SNARE complex, an extended, parallel four alpha-helical bundle that drives membrane fusion. Plays a role in the processing and secretion of the aspartic protease hrg-7 from the intestine. The chain is Soluble NSF attachment protein 29 from Caenorhabditis elegans.